We begin with the raw amino-acid sequence, 71 residues long: Translation initiation factor IF-1 (71 aa).

An S1-like domain is found at 1–71 (MSKDDLIQFT…LTKGRVIHRH (71 aa)).

The protein belongs to the IF-1 family. In terms of assembly, component of the 30S ribosomal translation pre-initiation complex which assembles on the 30S ribosome in the order IF-2 and IF-3, IF-1 and N-formylmethionyl-tRNA(fMet); mRNA recruitment can occur at any time during PIC assembly.

The protein localises to the cytoplasm. Its function is as follows. One of the essential components for the initiation of protein synthesis. Stabilizes the binding of IF-2 and IF-3 on the 30S subunit to which N-formylmethionyl-tRNA(fMet) subsequently binds. Helps modulate mRNA selection, yielding the 30S pre-initiation complex (PIC). Upon addition of the 50S ribosomal subunit IF-1, IF-2 and IF-3 are released leaving the mature 70S translation initiation complex. This chain is Translation initiation factor IF-1, found in Rickettsia felis (strain ATCC VR-1525 / URRWXCal2) (Rickettsia azadi).